Reading from the N-terminus, the 683-residue chain is Patellin-2 (683 aa).

The tract at residues 1-23 (MAQEEIQKPTASVPVVKEETPAP) is disordered. N-acetylalanine is present on Ala-2. Ser-79 is subject to Phosphoserine. A coiled-coil region spans residues 86–163 (LASELQEAEK…ETKEEEKSAA (78 aa)). A disordered region spans residues 111–279 (KREFTAPPPP…KKEEKATAST (169 aa)). Positions 124–161 (VKEEKVEEKKTEETEEKKEEVKTEEKSLEAETKEEEKS) are enriched in basic and acidic residues. Low complexity predominate over residues 232-243 (PVETTPAAPVTT). Positions 244–275 (ETKEEEKAAPVTTETKEEEKAAPGETKKEEKA) are enriched in basic and acidic residues. A Glycyl lysine isopeptide (Lys-Gly) (interchain with G-Cter in ubiquitin) cross-link involves residue Lys-394. In terms of domain architecture, CRAL-TRIO spans 404 to 576 (EDLEGSEFEK…KYGGLSKDSP (173 aa)). Residues 580–681 (EDGVTEAVVK…KKKVLYRSKT (102 aa)) enclose the GOLD domain.

It belongs to the patellin family. As to quaternary structure, interacts with the deubiquitinating enzyme AMSH3.

It localises to the membrane. Its subcellular location is the cytoplasm. In terms of biological role, carrier protein that may be involved in membrane-trafficking events associated with cell plate formation during cytokinesis. Binds to some hydrophobic molecules such as phosphoinositides and promotes their transfer between the different cellular sites. The polypeptide is Patellin-2 (PATL2) (Arabidopsis thaliana (Mouse-ear cress)).